Consider the following 505-residue polypeptide: Aminoaldehyde dehydrogenase 1a (505 aa).

Residue D101 participates in Na(+) binding. NAD(+)-binding positions include 161–163 and 187–190; these read TPW and KPSE. L191 provides a ligand contact to Na(+). NAD(+) contacts are provided by residues 241-244 and E262; that span reads SFET. E262 (proton acceptor) is an active-site residue. C296 serves as the catalytic Nucleophile. E395 and W461 together coordinate NAD(+).

It belongs to the aldehyde dehydrogenase family. As to quaternary structure, forms homodimers.

It catalyses the reaction 4-aminobutanal + NAD(+) + H2O = 4-aminobutanoate + NADH + 2 H(+). It carries out the reaction 3-aminopropanal + NAD(+) + H2O = beta-alanine + NADH + 2 H(+). The catalysed reaction is 4-(trimethylamino)butanal + NAD(+) + H2O = 4-(trimethylamino)butanoate + NADH + 2 H(+). The enzyme catalyses 4-guanidinobutanal + NAD(+) + H2O = 4-guanidinobutanoate + NADH + 2 H(+). It catalyses the reaction betaine aldehyde + NAD(+) + H2O = glycine betaine + NADH + 2 H(+). Its pathway is amine and polyamine biosynthesis; betaine biosynthesis via choline pathway; betaine from betaine aldehyde: step 1/1. Dehydrogenase that catalyzes the oxidation of several aminoaldehydes. Metabolizes and detoxifies aldehyde products of polyamine degradation to non-toxic amino acids. Catalyzes the oxidation of 4-aminobutanal and 3-aminopropanal to 4-aminobutanoate and beta-alanine, respectively. Catalyzes the oxidation of 4-(trimethylamino)butanal and 4-guanidinobutanal to 4-trimethylammoniobutanoate and 4-guanidinobutanoate, respectively. Catalyzes the oxidation of betaine aldehyde to glycine betaine. In terms of biological role, dehydrogenase that catalyzes the oxidation of several aminoaldehydes. Catalyzes the oxidation of betaine aldehyde to glycine betaine. Catalyzes the oxidation of 4-(trimethylamino)butanal to 4-trimethylammoniobutanoate. This Zea mays (Maize) protein is Aminoaldehyde dehydrogenase 1a.